We begin with the raw amino-acid sequence, 286 residues long: ATP synthase gamma chain (286 aa).

Belongs to the ATPase gamma chain family. In terms of assembly, F-type ATPases have 2 components, CF(1) - the catalytic core - and CF(0) - the membrane proton channel. CF(1) has five subunits: alpha(3), beta(3), gamma(1), delta(1), epsilon(1). CF(0) has three main subunits: a, b and c.

The protein localises to the cell inner membrane. Its function is as follows. Produces ATP from ADP in the presence of a proton gradient across the membrane. The gamma chain is believed to be important in regulating ATPase activity and the flow of protons through the CF(0) complex. This is ATP synthase gamma chain from Shewanella halifaxensis (strain HAW-EB4).